The sequence spans 798 residues: Penicillin-binding protein 1A (798 aa).

Over 1 to 9 (MIKKIVTTC) the chain is Cytoplasmic. A helical; Signal-anchor for type II membrane protein membrane pass occupies residues 10–30 (FGLVLGLCVFGVGLVAIAILV). The Periplasmic portion of the chain corresponds to 31-798 (TYPKLPSLDS…SKQPQLDSLF (768 aa)). The transglycosylase stretch occupies residues 50-218 (LTIYSADGEV…SAYNPIVNPE (169 aa)). Glu88 functions as the Proton donor; for transglycosylase activity in the catalytic mechanism. The transpeptidase stretch occupies residues 414 to 700 (VVVQEPLLQA…GTIAVPVWVD (287 aa)). Ser461 serves as the catalytic Acyl-ester intermediate; for transpeptidase activity. The interval 751–798 (SRRIREDKEAGAEDVERGAADEVRQEVQETPVLPSNTGSKQPQLDSLF) is disordered. Residues 753 to 777 (RIREDKEAGAEDVERGAADEVRQEV) are compositionally biased toward basic and acidic residues. A compositionally biased stretch (polar residues) spans 783 to 798 (LPSNTGSKQPQLDSLF).

The protein in the N-terminal section; belongs to the glycosyltransferase 51 family. In the C-terminal section; belongs to the transpeptidase family.

It is found in the cell inner membrane. The catalysed reaction is [GlcNAc-(1-&gt;4)-Mur2Ac(oyl-L-Ala-gamma-D-Glu-L-Lys-D-Ala-D-Ala)](n)-di-trans,octa-cis-undecaprenyl diphosphate + beta-D-GlcNAc-(1-&gt;4)-Mur2Ac(oyl-L-Ala-gamma-D-Glu-L-Lys-D-Ala-D-Ala)-di-trans,octa-cis-undecaprenyl diphosphate = [GlcNAc-(1-&gt;4)-Mur2Ac(oyl-L-Ala-gamma-D-Glu-L-Lys-D-Ala-D-Ala)](n+1)-di-trans,octa-cis-undecaprenyl diphosphate + di-trans,octa-cis-undecaprenyl diphosphate + H(+). It carries out the reaction Preferential cleavage: (Ac)2-L-Lys-D-Ala-|-D-Ala. Also transpeptidation of peptidyl-alanyl moieties that are N-acyl substituents of D-alanine.. It participates in cell wall biogenesis; peptidoglycan biosynthesis. In terms of biological role, cell wall formation. Synthesis of cross-linked peptidoglycan from the lipid intermediates. The enzyme has a penicillin-insensitive transglycosylase N-terminal domain (formation of linear glycan strands) and a penicillin-sensitive transpeptidase C-terminal domain (cross-linking of the peptide subunits). This chain is Penicillin-binding protein 1A (mrcA), found in Neisseria cinerea.